The following is a 653-amino-acid chain: Fidgetin-like protein 2 (653 aa).

Disordered regions lie at residues 1–36, 86–129, and 216–240; these read MHWT…ELPP, ASFL…SGAL, and YGAL…APTP. The span at 10 to 27 shows a compositional bias: polar residues; the sequence is PLNQWPEQHLDVSSTTPS. The segment covering 97-107 has biased composition (pro residues); the sequence is EPWPGPEPPYP. Positions 119 to 129 are enriched in gly residues; the sequence is KSGGGGGSGAL. A compositionally biased stretch (pro residues) spans 219 to 240; that stretch reads LPPPPGPPPAPYLTPGLPAPTP. Residues Ala-395 and 435–440 each bind ATP; that span reads GAGKAL.

Belongs to the AAA ATPase family. Requires Mg(2+) as cofactor.

It is found in the cytoplasm. The protein resides in the cell cortex. It carries out the reaction ATP + H2O = ADP + phosphate + H(+). Microtubule-severing enzyme that negatively regulates cell migration and wound healing. In migrating cells, targets dynamic microtubules (MTs) at the leading edge and severs them, thereby suppressing motility. Microtubule severing releases ARHGEF2 which activates RHOA, which in turn regulates focal ahesion turnover via focal adhesion kinase, as opposed to F-actin polymerization, to suppress cell motility. Negative regulator of axon regeneration that suppresses axonal growth by selectively severing dynamic MTs in the distal axon shaft and growth cone. Contributes to proper cell branching during endothelial and neuronal development. This chain is Fidgetin-like protein 2, found in Homo sapiens (Human).